The sequence spans 622 residues: Low affinity potassium transport system protein Kup (622 aa).

Helical transmembrane passes span L9–L29, V49–L69, V103–I123, P137–I157, V165–L185, V213–A233, W247–L267, P276–A296, I337–F357, L363–T383, F396–L416, and L419–T439.

The protein belongs to the HAK/KUP transporter (TC 2.A.72) family.

It is found in the cell inner membrane. It catalyses the reaction K(+)(in) + H(+)(in) = K(+)(out) + H(+)(out). Functionally, responsible for the low-affinity transport of potassium into the cell. Likely operates as a K(+):H(+) symporter. This chain is Low affinity potassium transport system protein Kup, found in Salmonella typhi.